A 339-amino-acid polypeptide reads, in one-letter code: Protein FAM50A (339 aa).

Residues 1 to 31 (MAQYKGAASEAGRAMHLMKKREKQREQMEQM) are disordered. A2 carries the post-translational modification N-acetylalanine. K100 participates in a covalent cross-link: Glycyl lysine isopeptide (Lys-Gly) (interchain with G-Cter in SUMO2). Residues 150-177 (TTKKKKLGKNPDVDTSFLPDRDREEEEN) are disordered. Residues 152–155 (KKKK) carry the Nuclear localization signal motif. The span at 168-177 (PDRDREEEEN) shows a compositional bias: basic and acidic residues.

The protein belongs to the FAM50 family. In terms of assembly, interacts with EFTUD2, a component of the spliceosome U5 complex. Interacts with DDX41, a component of the spliceosome C complex. In terms of tissue distribution, widely expressed in embryonic and adult tissues.

It localises to the nucleus. Functionally, probably involved in the regulation of pre-mRNA splicing. The chain is Protein FAM50A (Fam50a) from Mus musculus (Mouse).